The sequence spans 495 residues: Meiosis-specific nuclear structural protein 1 (495 aa).

An interaction with BBOF1 region spans residues Met-1–Glu-314. The stretch at Val-28–Lys-410 forms a coiled coil. Position 188 is a phosphotyrosine (Tyr-188).

This sequence belongs to the MNS1 family. In terms of assembly, able to form oligomers. Microtubule inner protein component of sperm flagellar doublet microtubules. Interacts with ODAD1. Interacts with BBOF1. As to expression, expressed in nasal respiratory epithelium and in the sperm.

Its subcellular location is the nucleus. It is found in the cytoplasm. The protein resides in the cytoskeleton. It localises to the cilium axoneme. The protein localises to the flagellum axoneme. Its function is as follows. Microtubule inner protein (MIP) part of the dynein-decorated doublet microtubules (DMTs) in cilia axoneme, which is required for motile cilia beating. May play a role in the control of meiotic division and germ cell differentiation through regulation of pairing and recombination during meiosis. Required for sperm flagella assembly. May play a role in the assembly and function of the outer dynein arm-docking complex (ODA-DC). ODA-DC mediates outer dynein arms (ODA) binding onto the axonemal doublet microtubules. The chain is Meiosis-specific nuclear structural protein 1 from Homo sapiens (Human).